Consider the following 218-residue polypeptide: uncharacterized protein (218 aa).

The segment covering 184 to 202 (MDREEKRKEKEEKRKRELA) has biased composition (basic and acidic residues). The tract at residues 184–218 (MDREEKRKEKEEKRKRELAARQLKRQEKKKQKTSK) is disordered. Residues 205–218 (QLKRQEKKKQKTSK) show a composition bias toward basic residues.

This is an uncharacterized protein from Mycoplasma pneumoniae (strain ATCC 29342 / M129 / Subtype 1) (Mycoplasmoides pneumoniae).